The chain runs to 465 residues: UDP-N-acetylmuramate--L-alanine ligase (465 aa).

An ATP-binding site is contributed by 112–118 (GTHGKTT).

The protein belongs to the MurCDEF family.

It localises to the cytoplasm. It carries out the reaction UDP-N-acetyl-alpha-D-muramate + L-alanine + ATP = UDP-N-acetyl-alpha-D-muramoyl-L-alanine + ADP + phosphate + H(+). The protein operates within cell wall biogenesis; peptidoglycan biosynthesis. Cell wall formation. The sequence is that of UDP-N-acetylmuramate--L-alanine ligase from Burkholderia cenocepacia (strain ATCC BAA-245 / DSM 16553 / LMG 16656 / NCTC 13227 / J2315 / CF5610) (Burkholderia cepacia (strain J2315)).